A 372-amino-acid chain; its full sequence is NAD(P)H-quinone oxidoreductase subunit 1 (372 aa).

The next 9 membrane-spanning stretches (helical) occupy residues Ala27 to Val47, Pro65 to Phe85, Trp97 to Val117, Ile128 to Met148, Ala166 to Met186, Ile204 to Leu224, Val266 to Ile286, Ala308 to Leu328, and Phe347 to Pro367.

This sequence belongs to the complex I subunit 1 family. NDH-1 is composed of at least 11 different subunits.

Its subcellular location is the cellular thylakoid membrane. It catalyses the reaction a plastoquinone + NADH + (n+1) H(+)(in) = a plastoquinol + NAD(+) + n H(+)(out). The catalysed reaction is a plastoquinone + NADPH + (n+1) H(+)(in) = a plastoquinol + NADP(+) + n H(+)(out). Functionally, NDH-1 shuttles electrons from an unknown electron donor, via FMN and iron-sulfur (Fe-S) centers, to quinones in the respiratory and/or the photosynthetic chain. The immediate electron acceptor for the enzyme in this species is believed to be plastoquinone. Couples the redox reaction to proton translocation, and thus conserves the redox energy in a proton gradient. The protein is NAD(P)H-quinone oxidoreductase subunit 1 of Trichormus variabilis (strain ATCC 29413 / PCC 7937) (Anabaena variabilis).